Consider the following 401-residue polypeptide: MPKSWPIVISSHSFCFLPNSEQERKMKDLNFHAATLSEEESLRELKAFDETKAGVKGIVDTGITKIPRIFIDQPKNLDRISVCRGKSDIKIPVINLNGLSSNSEIRREIVEKIGEASEKYGFFQIVNHGIPQDVMDKMVDGVRKFHEQDDQIKRQYYSRDRFNKNFLYSSNYVLIPGIACNWRDTMECIMNSNQPDPQEFPDVCRDILMKYSNYVRNLGLILFELLSEALGLKPNHLEEMDCAEGLILLGHYYPACPQPELTFGTSKHSDSGFLTILMQDQIGGLQILLENQWIDVPFIPGALVINIADLLQLITNDKFKSVEHRVLANKVGPRISVAVAFGIKTQTQEGVSPRLYGPIKELISEENPPIYKEVTVKDFITIRFAKRFDDSSSLSPFRLNN.

In terms of domain architecture, Fe2OG dioxygenase spans 242 to 345; that stretch reads CAEGLILLGH…SVAVAFGIKT (104 aa). H268, D270, and H324 together coordinate Fe cation. Position 334 (R334) interacts with 2-oxoglutarate.

This sequence belongs to the iron/ascorbate-dependent oxidoreductase family. As to quaternary structure, monomer. It depends on Fe cation as a cofactor. Requires L-ascorbate as cofactor. In terms of tissue distribution, highest levels in leaves, lower levels in stems and fruits. Not expressed in flowers and roots.

The protein resides in the cytoplasm. It is found in the nucleus. It catalyses the reaction deacetoxyvindoline + 2-oxoglutarate + O2 = 4-O-deacetylvindoline + succinate + CO2. It functions in the pathway alkaloid biosynthesis; vindoline biosynthesis. In terms of biological role, catalyzes the C4-hydroxylation of desacetoxyvindoline. The chain is Deacetoxyvindoline 4-hydroxylase from Catharanthus roseus (Madagascar periwinkle).